Consider the following 681-residue polypeptide: DNA-directed RNA polymerase subunit beta' (681 aa).

4 residues coordinate Zn(2+): C69, C71, C87, and C90. Positions 489, 491, and 493 each coordinate Mg(2+).

The protein belongs to the RNA polymerase beta' chain family. RpoC1 subfamily. In plastids the minimal PEP RNA polymerase catalytic core is composed of four subunits: alpha, beta, beta', and beta''. When a (nuclear-encoded) sigma factor is associated with the core the holoenzyme is formed, which can initiate transcription. Mg(2+) is required as a cofactor. It depends on Zn(2+) as a cofactor.

Its subcellular location is the plastid. The protein resides in the chloroplast. The catalysed reaction is RNA(n) + a ribonucleoside 5'-triphosphate = RNA(n+1) + diphosphate. In terms of biological role, DNA-dependent RNA polymerase catalyzes the transcription of DNA into RNA using the four ribonucleoside triphosphates as substrates. The chain is DNA-directed RNA polymerase subunit beta' from Nicotiana tomentosiformis (Tobacco).